A 929-amino-acid chain; its full sequence is Leucine--tRNA ligase (929 aa).

The 'HIGH' region motif lies at 42 to 52 (PYPSGNLHMGH). Residues 614 to 618 (KMSKS) carry the 'KMSKS' region motif. Position 617 (Lys617) interacts with ATP.

It belongs to the class-I aminoacyl-tRNA synthetase family.

It is found in the cytoplasm. It carries out the reaction tRNA(Leu) + L-leucine + ATP = L-leucyl-tRNA(Leu) + AMP + diphosphate. The chain is Leucine--tRNA ligase from Trichodesmium erythraeum (strain IMS101).